Here is a 93-residue protein sequence, read N- to C-terminus: Precursor of CEP13 (93 aa).

The N-terminal stretch at 1 to 27 (MARPRISISMICLLILIVGFVLQSSQA) is a signal peptide. Positions 28 to 78 (RKVLVPYGTSKGLFLSALPKGNVPPSGPSDKGHTSPPDDTDQRMVPENSPE) are excised as a propeptide. The disordered stretch occupies residues 45-93 (LPKGNVPPSGPSDKGHTSPPDDTDQRMVPENSPEIYRRLESVPSPGVGH). 2 positions are modified to hydroxyproline: P87 and P89.

Belongs to the C-terminally encoded plant signaling peptide (CEP) family. Interacts with CEP receptors (e.g. CEPR1 and CEPR2). Post-translationally, the mature small signaling peptide is generated by proteolytic processing of the longer precursor.

It localises to the secreted. The protein localises to the extracellular space. Its subcellular location is the apoplast. Functionally, extracellular signaling peptide that may regulate primary root growth rate and systemic nitrogen (N)-demand signaling. The sequence is that of Precursor of CEP13 from Arabidopsis thaliana (Mouse-ear cress).